A 387-amino-acid chain; its full sequence is Protein REVEILLE 1 (387 aa).

Polar residues-rich tracts occupy residues 1–17 (MASS…NASL) and 27–37 (KQIQFNDQSFG). The interval 1–44 (MASSPLTANVQGTNASLRNRDEETADKQIQFNDQSFGGNDYAPK) is disordered. The HTH myb-type domain occupies 50-104 (TITKERERWTDEEHKKFVEALKLYGRAWRRIEEHVGSKTAVQIRSHAQKFFSKVA). The H-T-H motif DNA-binding region spans 77 to 100 (WRRIEEHVGSKTAVQIRSHAQKFF). Disordered regions lie at residues 105-200 (REAT…TANA), 306-334 (KAVQ…TTEP), and 350-387 (AFSE…HLHL). Basic residues predominate over residues 124-134 (RPKRKPAHPYP). Residues 141-166 (ADQTSRSVSPSERDTQSPTSVLSTVG) show a composition bias toward polar residues. Low complexity-rich tracts occupy residues 172–200 (SLDS…TANA) and 312–323 (GSSTGSNTGSVD). Residues 324–333 (DTGHTEKTTE) show a composition bias toward basic and acidic residues.

The protein localises to the nucleus. Its function is as follows. Morning-phased transcription factor integrating the circadian clock and auxin pathways. Binds to the evening element (EE) of promoters. Does not act within the central clock, but regulates free auxin levels in a time-of-day specific manner. Positively regulates the expression of YUC8 during the day, but has no effect during the night. Negative regulator of freezing tolerance. This is Protein REVEILLE 1 (RVE1) from Arabidopsis thaliana (Mouse-ear cress).